The chain runs to 261 residues: MILDEILKKTREDLKRRKKMLSFELLGRSLSANPYMPRDVIKALKSTPNEPFKLICEIKKASPSKGVIREYFKPVEIAREYEKAGADAFSVLTEPHFFKGDLEFISQIRRYTKMPILRKDFIIDEYQILEALVYGADFVLLIAKALSLKELKKLLEFTHHIGLEALVEVHDKKDLLNATLSGANIIGINHRDLNDFSLHMNLAEELVPLIPNGKIIVAESGLNSREQLVNLNKVGVDAFLIGEHFMRQNDICAAVREMKGV.

The protein belongs to the TrpC family.

It carries out the reaction 1-(2-carboxyphenylamino)-1-deoxy-D-ribulose 5-phosphate + H(+) = (1S,2R)-1-C-(indol-3-yl)glycerol 3-phosphate + CO2 + H2O. It functions in the pathway amino-acid biosynthesis; L-tryptophan biosynthesis; L-tryptophan from chorismate: step 4/5. The chain is Indole-3-glycerol phosphate synthase from Campylobacter hominis (strain ATCC BAA-381 / DSM 21671 / CCUG 45161 / LMG 19568 / NCTC 13146 / CH001A).